Here is a 1400-residue protein sequence, read N- to C-terminus: DNA-directed RNA polymerase subunit beta' (1400 aa).

Cysteine 71, cysteine 73, cysteine 86, and cysteine 89 together coordinate Zn(2+). Residues aspartate 462, aspartate 464, and aspartate 466 each contribute to the Mg(2+) site. Residues cysteine 820, cysteine 893, cysteine 900, and cysteine 903 each coordinate Zn(2+).

Belongs to the RNA polymerase beta' chain family. The RNAP catalytic core consists of 2 alpha, 1 beta, 1 beta' and 1 omega subunit. When a sigma factor is associated with the core the holoenzyme is formed, which can initiate transcription. The cofactor is Mg(2+). Requires Zn(2+) as cofactor.

It carries out the reaction RNA(n) + a ribonucleoside 5'-triphosphate = RNA(n+1) + diphosphate. In terms of biological role, DNA-dependent RNA polymerase catalyzes the transcription of DNA into RNA using the four ribonucleoside triphosphates as substrates. The polypeptide is DNA-directed RNA polymerase subunit beta' (Methylobacterium sp. (strain 4-46)).